Consider the following 305-residue polypeptide: Pseudouridine-5'-phosphate glycosidase (305 aa).

The active-site Proton donor is the Glu-30. Substrate is bound by residues Lys-91 and Val-111. A Mn(2+)-binding site is contributed by Asp-143. Residue 145–147 coordinates substrate; it reads SAD. The Nucleophile role is filled by Lys-164.

This sequence belongs to the pseudouridine-5'-phosphate glycosidase family. As to quaternary structure, homotrimer. It depends on Mn(2+) as a cofactor.

It carries out the reaction D-ribose 5-phosphate + uracil = psi-UMP + H2O. In terms of biological role, catalyzes the reversible cleavage of pseudouridine 5'-phosphate (PsiMP) to ribose 5-phosphate and uracil. Functions biologically in the cleavage direction, as part of a pseudouridine degradation pathway. This is Pseudouridine-5'-phosphate glycosidase from Mesorhizobium japonicum (strain LMG 29417 / CECT 9101 / MAFF 303099) (Mesorhizobium loti (strain MAFF 303099)).